We begin with the raw amino-acid sequence, 92 residues long: MEIRILKSESNYLELEIEGEDHTLGNLIAGTLRRISGVSFASYYQPHPLSDKIIVKILTDGSITPKDALLKAIENIRGMTSHYIDEIKGLTK.

Belongs to the archaeal Rpo11/eukaryotic RPB11/RPC19 RNA polymerase subunit family. As to quaternary structure, part of the 13-subunit RNA polymerase complex.

Its subcellular location is the cytoplasm. The enzyme catalyses RNA(n) + a ribonucleoside 5'-triphosphate = RNA(n+1) + diphosphate. Its function is as follows. DNA-dependent RNA polymerase (RNAP) catalyzes the transcription of DNA into RNA using the four ribonucleoside triphosphates as substrates. The protein is DNA-directed RNA polymerase subunit Rpo11 of Saccharolobus solfataricus (strain ATCC 35092 / DSM 1617 / JCM 11322 / P2) (Sulfolobus solfataricus).